A 448-amino-acid chain; its full sequence is Trigger factor (448 aa).

Positions 160–245 constitute a PPIase FKBP-type domain; that stretch reads GDMLLMKVES…IQEIREEKLP (86 aa).

Belongs to the FKBP-type PPIase family. Tig subfamily.

Its subcellular location is the cytoplasm. It catalyses the reaction [protein]-peptidylproline (omega=180) = [protein]-peptidylproline (omega=0). Involved in protein export. Acts as a chaperone by maintaining the newly synthesized protein in an open conformation. Functions as a peptidyl-prolyl cis-trans isomerase. This Dehalococcoides mccartyi (strain ATCC BAA-2266 / KCTC 15142 / 195) (Dehalococcoides ethenogenes (strain 195)) protein is Trigger factor.